The sequence spans 262 residues: 1-(5-phosphoribosyl)-5-[(5-phosphoribosylamino)methylideneamino] imidazole-4-carboxamide isomerase (262 aa).

Asp-8 functions as the Proton acceptor in the catalytic mechanism. The active-site Proton donor is Asp-130.

It belongs to the HisA/HisF family.

It is found in the cytoplasm. The enzyme catalyses 1-(5-phospho-beta-D-ribosyl)-5-[(5-phospho-beta-D-ribosylamino)methylideneamino]imidazole-4-carboxamide = 5-[(5-phospho-1-deoxy-D-ribulos-1-ylimino)methylamino]-1-(5-phospho-beta-D-ribosyl)imidazole-4-carboxamide. Its pathway is amino-acid biosynthesis; L-histidine biosynthesis; L-histidine from 5-phospho-alpha-D-ribose 1-diphosphate: step 4/9. The polypeptide is 1-(5-phosphoribosyl)-5-[(5-phosphoribosylamino)methylideneamino] imidazole-4-carboxamide isomerase (Chloroherpeton thalassium (strain ATCC 35110 / GB-78)).